A 101-amino-acid chain; its full sequence is Large ribosomal subunit protein uL23 (101 aa).

It belongs to the universal ribosomal protein uL23 family. In terms of assembly, part of the 50S ribosomal subunit. Contacts protein L29, and trigger factor when it is bound to the ribosome.

One of the early assembly proteins it binds 23S rRNA. One of the proteins that surrounds the polypeptide exit tunnel on the outside of the ribosome. Forms the main docking site for trigger factor binding to the ribosome. The protein is Large ribosomal subunit protein uL23 of Azoarcus sp. (strain BH72).